A 500-amino-acid polypeptide reads, in one-letter code: L-arabinose isomerase (500 aa).

4 residues coordinate Mn(2+): Glu-306, Glu-333, His-350, and His-450.

This sequence belongs to the arabinose isomerase family. As to quaternary structure, homohexamer. It depends on Mn(2+) as a cofactor.

It carries out the reaction beta-L-arabinopyranose = L-ribulose. It functions in the pathway carbohydrate degradation; L-arabinose degradation via L-ribulose; D-xylulose 5-phosphate from L-arabinose (bacterial route): step 1/3. In terms of biological role, catalyzes the conversion of L-arabinose to L-ribulose. The sequence is that of L-arabinose isomerase from Escherichia coli O6:H1 (strain CFT073 / ATCC 700928 / UPEC).